Consider the following 132-residue polypeptide: UPF0201 protein MTH_433 (132 aa).

It belongs to the UPF0201 family.

In Methanothermobacter thermautotrophicus (strain ATCC 29096 / DSM 1053 / JCM 10044 / NBRC 100330 / Delta H) (Methanobacterium thermoautotrophicum), this protein is UPF0201 protein MTH_433.